The following is a 694-amino-acid chain: Elongation factor G (694 aa).

The region spanning 9–288 (DAIRNIGIMA…VIVKWLPSPL (280 aa)) is the tr-type G domain. GTP contacts are provided by residues 18–25 (AHIDAGKT), 82–86 (DTPGH), and 136–139 (NKMD).

Belongs to the TRAFAC class translation factor GTPase superfamily. Classic translation factor GTPase family. EF-G/EF-2 subfamily.

The protein resides in the cytoplasm. Catalyzes the GTP-dependent ribosomal translocation step during translation elongation. During this step, the ribosome changes from the pre-translocational (PRE) to the post-translocational (POST) state as the newly formed A-site-bound peptidyl-tRNA and P-site-bound deacylated tRNA move to the P and E sites, respectively. Catalyzes the coordinated movement of the two tRNA molecules, the mRNA and conformational changes in the ribosome. This is Elongation factor G (fusA) from Chlamydia muridarum (strain MoPn / Nigg).